A 187-amino-acid polypeptide reads, in one-letter code: UPF0398 protein SH1465 (187 aa).

It belongs to the UPF0398 family.

This is UPF0398 protein SH1465 from Staphylococcus haemolyticus (strain JCSC1435).